We begin with the raw amino-acid sequence, 793 residues long: Serine/threonine-protein phosphatase 1 regulatory subunit GAC1 (793 aa).

The segment covering 1 to 10 has biased composition (polar residues); the sequence is MVIQTATTLS. Residues 1 to 20 form a disordered region; it reads MVIQTATTLSPAKARPSFPH. Residues 235-360 form the CBM21 domain; that stretch reads TKYLNGQNVK…NNNGKNYHLF (126 aa). Phosphoserine occurs at positions 415 and 424. Disordered regions lie at residues 450–491 and 616–671; these read LENA…SIDL and TTMD…LNDH. A compositionally biased stretch (polar residues) spans 623–633; the sequence is KTSTINNSTDT. Residues 637–648 show a composition bias toward basic and acidic residues; the sequence is PSKENGTVKENK. Over residues 649-665 the composition is skewed to low complexity; sequence SSANSTSAPSSSQNRAS.

Regulates the activity of glycogen synthase. It is most probably a regulatory subunit for protein phosphatase type 1. The polypeptide is Serine/threonine-protein phosphatase 1 regulatory subunit GAC1 (GAC1) (Saccharomyces cerevisiae (strain ATCC 204508 / S288c) (Baker's yeast)).